The following is a 372-amino-acid chain: Alanine racemase (372 aa).

The Proton acceptor; specific for D-alanine role is filled by Lys41. Lys41 carries the N6-(pyridoxal phosphate)lysine modification. Residue Arg139 coordinates substrate. The active-site Proton acceptor; specific for L-alanine is the Tyr268. Met316 lines the substrate pocket.

This sequence belongs to the alanine racemase family. Pyridoxal 5'-phosphate serves as cofactor.

It carries out the reaction L-alanine = D-alanine. Its pathway is amino-acid biosynthesis; D-alanine biosynthesis; D-alanine from L-alanine: step 1/1. Catalyzes the interconversion of L-alanine and D-alanine. May also act on other amino acids. In Borreliella burgdorferi (strain ATCC 35210 / DSM 4680 / CIP 102532 / B31) (Borrelia burgdorferi), this protein is Alanine racemase (alr).